Here is a 158-residue protein sequence, read N- to C-terminus: Succinate dehydrogenase [ubiquinone] cytochrome b small subunit, mitochondrial (158 aa).

A mitochondrion-targeting transit peptide spans Met-1 to His-55. Topologically, residues Ser-56 to Ser-62 are mitochondrial matrix. The helical transmembrane segment at Leu-63–Leu-84 threads the bilayer. The Mitochondrial intermembrane portion of the chain corresponds to Asn-85–Ala-89. Residues Met-90–Val-110 traverse the membrane as a helical segment. His-101 contacts heme b. Residues Thr-111 to Val-119 are Mitochondrial matrix-facing. Tyr-113 serves as a coordination point for a ubiquinone. Residues Gln-120–Phe-141 traverse the membrane as a helical segment. The Mitochondrial intermembrane segment spans residues Asn-142–Leu-158.

It belongs to the CybS family. In terms of assembly, component of complex II composed of four subunits: the flavoprotein (FP) SDHA, iron-sulfur protein (IP) SDHB, and a cytochrome b560 composed of SDHC and SDHD.

The protein localises to the mitochondrion inner membrane. It functions in the pathway carbohydrate metabolism; tricarboxylic acid cycle. In terms of biological role, membrane-anchoring subunit of succinate dehydrogenase (SDH) that is involved in complex II of the mitochondrial electron transport chain and is responsible for transferring electrons from succinate to ubiquinone (coenzyme Q). SDH also oxidizes malate to the non-canonical enol form of oxaloacetate, enol-oxaloacetate. Enol-oxaloacetate, which is a potent inhibitor of the succinate dehydrogenase activity, is further isomerized into keto-oxaloacetate. In Bos taurus (Bovine), this protein is Succinate dehydrogenase [ubiquinone] cytochrome b small subunit, mitochondrial (SDHD).